We begin with the raw amino-acid sequence, 185 residues long: NADH-quinone oxidoreductase subunit B (185 aa).

C64, C65, C129, and C159 together coordinate [4Fe-4S] cluster.

It belongs to the complex I 20 kDa subunit family. NDH-1 is composed of 14 different subunits. Subunits NuoB, C, D, E, F, and G constitute the peripheral sector of the complex. The cofactor is [4Fe-4S] cluster.

It localises to the cell inner membrane. It catalyses the reaction a quinone + NADH + 5 H(+)(in) = a quinol + NAD(+) + 4 H(+)(out). In terms of biological role, NDH-1 shuttles electrons from NADH, via FMN and iron-sulfur (Fe-S) centers, to quinones in the respiratory chain. Couples the redox reaction to proton translocation (for every two electrons transferred, four hydrogen ions are translocated across the cytoplasmic membrane), and thus conserves the redox energy in a proton gradient. In Rhodospirillum rubrum (strain ATCC 11170 / ATH 1.1.1 / DSM 467 / LMG 4362 / NCIMB 8255 / S1), this protein is NADH-quinone oxidoreductase subunit B.